The primary structure comprises 708 residues: O-antigen chain terminator bifunctional methyltransferase/kinase WbdD (708 aa).

The methyltransferase stretch occupies residues 1–210 (MTKDLNTLVS…VPRPMYLVSN (210 aa)). Residues 16 to 17 (YQ), Arg-36, Gly-61, 82 to 87 (DFQQEN), 108 to 111 (GRIE), and Leu-128 contribute to the S-adenosyl-L-methionine site. The segment at 211–459 (HRVLINDFNQ…AKLPSAEQQR (249 aa)) is kinase. ATP contacts are provided by residues Pro-229, His-237, 241–243 (RRY), Lys-252, Glu-274, 309–311 (EKL), Met-358, and Asp-369. Residues 485–594 (AGSEALRGQI…EIEKIHRSRS (110 aa)) are a coiled coil. Positions 601–669 (YRYLGLQIHL…RLYRRMNPLP (69 aa)) are required for membrane-binding. Residues 687-708 (VMHPELLPPEVYEIYLKLTKNK) are required for localizing WbdA to the membrane.

Belongs to the WbdD family. As to quaternary structure, interacts with WbdA.

The protein localises to the cell inner membrane. The enzyme catalyses 3-O-phospho-alpha-D-Man-(1-&gt;2)-alpha-D-Man-(1-&gt;2)-[alpha-D-Man-(1-&gt;3)-alpha-D-Man-(1-&gt;3)-alpha-D-Man-(1-&gt;2)-alpha-D-Man-(1-&gt;2)](n)-alpha-D-Man-(1-&gt;3)-alpha-D-Man-(1-&gt;3)-alpha-D-Man-(1-&gt;3)-alpha-D-GlcNAc-di-trans,octa-cis-undecaprenyl diphosphate + S-adenosyl-L-methionine = 3-O-methylphospho-alpha-D-Man-(1-&gt;2)-alpha-D-Man-(1-&gt;2)-[alpha-D-Man-(1-&gt;3)-alpha-D-Man-(1-&gt;3)-alpha-D-Man-(1-&gt;2)-alpha-D-Man-(1-&gt;2)](n)-alpha-D-Man-(1-&gt;3)-alpha-D-Man-(1-&gt;3)-alpha-D-Man-(1-&gt;3)-alpha-D-GlcNAc-di-trans,octa-cis-undecaprenyl diphosphate + S-adenosyl-L-homocysteine. The catalysed reaction is alpha-D-Man-(1-&gt;2)-alpha-D-Man-(1-&gt;2)-[alpha-D-Man-(1-&gt;3)-alpha-D-Man-(1-&gt;3)-alpha-D-Man-(1-&gt;2)-alpha-D-Man-(1-&gt;2)](n)-alpha-D-Man-(1-&gt;3)-alpha-D-Man-(1-&gt;3)-alpha-D-Man-(1-&gt;3)-alpha-D-GlcNAc-di-trans,octa-cis-undecaprenyl diphosphate + ATP = 3-O-phospho-alpha-D-Man-(1-&gt;2)-alpha-D-Man-(1-&gt;2)-[alpha-D-Man-(1-&gt;3)-alpha-D-Man-(1-&gt;3)-alpha-D-Man-(1-&gt;2)-alpha-D-Man-(1-&gt;2)](n)-alpha-D-Man-(1-&gt;3)-alpha-D-Man-(1-&gt;3)-alpha-D-Man-(1-&gt;3)-alpha-D-GlcNAc-di-trans,octa-cis-undecaprenyl diphosphate + ADP + H(+). The protein operates within bacterial outer membrane biogenesis; LPS O-antigen biosynthesis. Its function is as follows. Regulates the length of the LPS O-antigen polysaccharide chain. Stops the polymerization of the chain by phosphorylating and then methylating the phosphate on the terminal sugar. This terminal modification is essential for export of the O-antigen across the inner membrane. WbdD is also required for correct localization of the WbdA mannosyltransferase. This chain is O-antigen chain terminator bifunctional methyltransferase/kinase WbdD, found in Escherichia coli.